The primary structure comprises 121 residues: MTREEMIQAIKEMSVLELNELVKACEEEFGVSAAAPVAVAGVAGAVGAAEEKSEFDVVLANAGSQKIKVIKAVRELTGLGLKEAKEIVDGAPKTLKEGVAKEAAEEMKAKLEEVGATIELK.

This sequence belongs to the bacterial ribosomal protein bL12 family. In terms of assembly, homodimer. Part of the ribosomal stalk of the 50S ribosomal subunit. Forms a multimeric L10(L12)X complex, where L10 forms an elongated spine to which 2 to 4 L12 dimers bind in a sequential fashion. Binds GTP-bound translation factors.

In terms of biological role, forms part of the ribosomal stalk which helps the ribosome interact with GTP-bound translation factors. Is thus essential for accurate translation. This is Large ribosomal subunit protein bL12 from Clostridium novyi (strain NT).